Here is an 874-residue protein sequence, read N- to C-terminus: Alanine--tRNA ligase (874 aa).

Zn(2+)-binding residues include His-562, His-566, Cys-664, and His-668.

The protein belongs to the class-II aminoacyl-tRNA synthetase family. Zn(2+) is required as a cofactor.

It localises to the cytoplasm. It catalyses the reaction tRNA(Ala) + L-alanine + ATP = L-alanyl-tRNA(Ala) + AMP + diphosphate. In terms of biological role, catalyzes the attachment of alanine to tRNA(Ala) in a two-step reaction: alanine is first activated by ATP to form Ala-AMP and then transferred to the acceptor end of tRNA(Ala). Also edits incorrectly charged Ser-tRNA(Ala) and Gly-tRNA(Ala) via its editing domain. The protein is Alanine--tRNA ligase of Shewanella putrefaciens (strain CN-32 / ATCC BAA-453).